The primary structure comprises 418 residues: Staphyloferrin B transporter (418 aa).

10 helical membrane-spanning segments follow: residues 19–39 (FIAIAGLTVLVPLLPIYMASL), 49–69 (LWSGIAIAAPAVTTMIASPIW), 88–108 (GLAVCLFLMALCTTPLQFVLV), 163–183 (ILGFSALLMSIAVITFIVCIF), 222–242 (FIIVGVLANFAMYGMLTALSP), 257–277 (VIGFLQSAFWTASILSAPLWG), 287–307 (SVYIFATIACGCSAILQGLAT), 317–337 (ILQGLTYSALIQSVMFVVVNA), 353–373 (MLVVGQIIGSLSGAAITSYTT), and 377–397 (TFIVMGVVFAVSSLFLICSTI).

Belongs to the major facilitator superfamily.

The protein localises to the cell membrane. In terms of biological role, involved in staphyloferrin B secretion. The chain is Staphyloferrin B transporter from Staphylococcus aureus (strain NCTC 8325 / PS 47).